Reading from the N-terminus, the 287-residue chain is Transcription initiation factor IIB 1 (287 aa).

The segment at 3–31 adopts a TFIIB-type zinc-finger fold; sequence HPHRCPECDGTIRETDTEHVCADCGLVVT. Residues Cys-7, Cys-10, Cys-23, and Cys-26 each contribute to the Zn(2+) site. Residues 40–53 show a composition bias toward basic and acidic residues; it reads EWRTFSDDPDHAPE. The tract at residues 40–63 is disordered; it reads EWRTFSDDPDHAPERTGAPLTRSR. A run of 2 repeats spans residues 111–194 and 205–286.

This sequence belongs to the TFIIB family.

Its function is as follows. Stabilizes TBP binding to an archaeal box-A promoter. Also responsible for recruiting RNA polymerase II to the pre-initiation complex (DNA-TBP-TFIIB). This chain is Transcription initiation factor IIB 1, found in Halobacterium salinarum (strain ATCC 700922 / JCM 11081 / NRC-1) (Halobacterium halobium).